A 245-amino-acid polypeptide reads, in one-letter code: 1-(5-phosphoribosyl)-5-[(5-phosphoribosylamino)methylideneamino] imidazole-4-carboxamide isomerase (245 aa).

Residue Asp-7 is the Proton acceptor of the active site. Catalysis depends on Asp-129, which acts as the Proton donor.

It belongs to the HisA/HisF family.

Its subcellular location is the cytoplasm. The catalysed reaction is 1-(5-phospho-beta-D-ribosyl)-5-[(5-phospho-beta-D-ribosylamino)methylideneamino]imidazole-4-carboxamide = 5-[(5-phospho-1-deoxy-D-ribulos-1-ylimino)methylamino]-1-(5-phospho-beta-D-ribosyl)imidazole-4-carboxamide. It participates in amino-acid biosynthesis; L-histidine biosynthesis; L-histidine from 5-phospho-alpha-D-ribose 1-diphosphate: step 4/9. This chain is 1-(5-phosphoribosyl)-5-[(5-phosphoribosylamino)methylideneamino] imidazole-4-carboxamide isomerase, found in Escherichia coli O9:H4 (strain HS).